The primary structure comprises 249 residues: Chromosome segregation and cytokinesis defective protein 1 (249 aa).

Residues 12–48 (VVAMADTLETRVKDLLEEYKKKLREVALQTAKAESDR) are a coiled coil. Disordered stretches follow at residues 70–89 (PDDF…AAVA), 94–183 (LPSE…PEKP), and 208–249 (TTAT…GTSV). Residues 73–85 (FYIESGEEEEEGE) show a composition bias toward acidic residues. Residues 109–126 (QKTSIPIGQNSGRNTVQV) are compositionally biased toward polar residues. Residues 224–236 (SGAASKKAAAAAG) are compositionally biased toward low complexity.

This sequence belongs to the borealin family. Highly divergent. As to quaternary structure, component of the CPC complex which consists of icp-1; csc-1; bir-1 and air-2. Within the complex interacts with Aurora B/air-2, bir-1 and icp-1.

The protein resides in the nucleus. It localises to the chromosome. The protein localises to the centromere. It is found in the cytoplasm. Its subcellular location is the cytoskeleton. The protein resides in the spindle. Its function is as follows. Component of the chromosomal passenger complex (CPC), a complex that acts as a key regulator of chromosome segregation and cytokinesis during mitosis. The CPC complex has essential functions at the centromere in ensuring correct chromosome alignment and segregation. In the complex, it may be required to direct the Aurora B/air-2 to centromeric DNA. This Caenorhabditis elegans protein is Chromosome segregation and cytokinesis defective protein 1 (csc-1).